The sequence spans 490 residues: Proline--tRNA ligase (490 aa).

It belongs to the class-II aminoacyl-tRNA synthetase family. ProS type 3 subfamily. As to quaternary structure, homodimer.

It is found in the cytoplasm. It carries out the reaction tRNA(Pro) + L-proline + ATP = L-prolyl-tRNA(Pro) + AMP + diphosphate. Functionally, catalyzes the attachment of proline to tRNA(Pro) in a two-step reaction: proline is first activated by ATP to form Pro-AMP and then transferred to the acceptor end of tRNA(Pro). This Salinibacter ruber (strain DSM 13855 / M31) protein is Proline--tRNA ligase.